The chain runs to 426 residues: Delta-aminolevulinic acid dehydratase, chloroplastic (426 aa).

The transit peptide at 1 to 45 directs the protein to the chloroplast; sequence MASTVSFSPANVQMLQGRSCHGHAAFGGCSAVPRTGPRMRSVAVR. A disordered region spans residues 74 to 107; that stretch reads GRFPAPPPLVRPKAPEGTPQIRPLDLTKRPRRNR. The active-site Schiff-base intermediate with substrate is the K293. Positions 303 and 315 each coordinate 5-aminolevulinate. E331 contributes to the Mg(2+) binding site. Catalysis depends on K346, which acts as the Schiff-base intermediate with substrate. Residues S372 and Y411 each contribute to the 5-aminolevulinate site.

It belongs to the ALAD family. In terms of assembly, homooctamer. Mg(2+) is required as a cofactor.

The protein localises to the plastid. The protein resides in the chloroplast. It catalyses the reaction 2 5-aminolevulinate = porphobilinogen + 2 H2O + H(+). Its pathway is porphyrin-containing compound metabolism; protoporphyrin-IX biosynthesis; coproporphyrinogen-III from 5-aminolevulinate: step 1/4. Its function is as follows. Catalyzes an early step in the biosynthesis of tetrapyrroles. Binds two molecules of 5-aminolevulinate per subunit, each at a distinct site, and catalyzes their condensation to form porphobilinogen. This chain is Delta-aminolevulinic acid dehydratase, chloroplastic (HEMB), found in Oryza sativa subsp. japonica (Rice).